A 366-amino-acid polypeptide reads, in one-letter code: 1-deoxy-D-xylulose 5-phosphate reductoisomerase (366 aa).

Residues T7, G8, S9, I10, G31, K32, N33, and N113 each coordinate NADPH. K114 serves as a coordination point for 1-deoxy-D-xylulose 5-phosphate. Position 115 (E115) interacts with NADPH. A Mn(2+)-binding site is contributed by D133. 1-deoxy-D-xylulose 5-phosphate-binding residues include S134, E135, S158, and H181. E135 is a Mn(2+) binding site. G187 provides a ligand contact to NADPH. S194, N199, K200, and E203 together coordinate 1-deoxy-D-xylulose 5-phosphate. Residue E203 coordinates Mn(2+).

It belongs to the DXR family. Requires Mg(2+) as cofactor. Mn(2+) is required as a cofactor.

It carries out the reaction 2-C-methyl-D-erythritol 4-phosphate + NADP(+) = 1-deoxy-D-xylulose 5-phosphate + NADPH + H(+). It participates in isoprenoid biosynthesis; isopentenyl diphosphate biosynthesis via DXP pathway; isopentenyl diphosphate from 1-deoxy-D-xylulose 5-phosphate: step 1/6. Its function is as follows. Catalyzes the NADPH-dependent rearrangement and reduction of 1-deoxy-D-xylulose-5-phosphate (DXP) to 2-C-methyl-D-erythritol 4-phosphate (MEP). The protein is 1-deoxy-D-xylulose 5-phosphate reductoisomerase of Helicobacter pylori (strain G27).